Reading from the N-terminus, the 493-residue chain is Beta-amyrin 11-oxidase (493 aa).

Residues 7–23 (CMSAATLLVCYIFGSKF) traverse the membrane as a helical segment. Cys-439 contributes to the heme binding site.

Belongs to the cytochrome P450 family. The cofactor is heme. In terms of tissue distribution, expressed in roots and stolons. Not detected in leaves and stems.

Its subcellular location is the membrane. It carries out the reaction beta-amyrin + 2 reduced [NADPH--hemoprotein reductase] + 2 O2 = 11-oxo-beta-amyrin + 2 oxidized [NADPH--hemoprotein reductase] + 3 H2O + 2 H(+). The enzyme catalyses beta-amyrin + reduced [NADPH--hemoprotein reductase] + O2 = 11alpha-hydroxy-beta-amyrin + oxidized [NADPH--hemoprotein reductase] + H2O + H(+). It catalyses the reaction 11alpha-hydroxy-beta-amyrin + reduced [NADPH--hemoprotein reductase] + O2 = 11-oxo-beta-amyrin + oxidized [NADPH--hemoprotein reductase] + 2 H2O + H(+). Functionally, involved in the biosynthesis of Glycyrrhetinic acid (GA), a natural product which exhibits anti-inflammatory activity. Catalyzes 2 successive oxidations of beta-amyrin, producing a precursor of the triterpene sweetener glycyrrhizin. Unable to use 11-deoxoglycyrrhetinic acid or ent-kaurenoic acid as substrates. In Glycyrrhiza uralensis (Chinese licorice), this protein is Beta-amyrin 11-oxidase.